Here is a 369-residue protein sequence, read N- to C-terminus: FAD-dependent monooxygenase FPY4 (369 aa).

This sequence belongs to the aromatic-ring hydroxylase family. The cofactor is FAD.

It functions in the pathway secondary metabolite biosynthesis. Its function is as follows. FAD-dependent monooxygenase; part of the gene cluster that mediates the biosynthesis of the gamma-pyrones fusapyrone (FPY) and deoxyfusapyrone (dFPY). FPY is an undecaketide and thus likely synthesized by the polyketide synthase FPY1 from acetyl-CoA functioning as starter unit and the addition of 10 malonyl-CoA extender units by successive Claisen-condensations. Next to this, FPY shares some rare features: C-glycosylated 4-deoxyglucose at C-3, a gem-dimethyl group at C-13, and an alpha-beta to beta-gamma double bond shift at C-20. During FPY biosynthesis mono-C-methyl groups are transferred to the tetra-, penta-, hexa- and heptaketide, while two C-methyl groups are transferred to the nonaketide, suggesting that the CMet domain is programmed to selectively catalyze two successive C-alpha-methylation reactions of the nonaketide, while other alpha-carbons are non- or mono-methylated only. While the origin of the 4'-deoxyglucose moiety remains opaque, its transfer to C-3 is most likely mediated by the C-glycosyltransferase FPY2. Next to this, the hydroxyl group present at C-33 and discriminating between FPY and dFPY, is likely to be installed by the cytochrome P450 monooxygenase FPY7. No putative function can be predicted for the remaining genes FPY3-FPY6. The chain is FAD-dependent monooxygenase FPY4 from Fusarium mangiferae (Mango malformation disease fungus).